A 337-amino-acid chain; its full sequence is Putative 4-hydroxythreonine-4-phosphate dehydrogenase (337 aa).

Residues H172, H216, and H271 each coordinate a divalent metal cation.

It belongs to the PdxA family. Homodimer. Zn(2+) serves as cofactor. Mg(2+) is required as a cofactor. The cofactor is Co(2+).

The protein resides in the cytoplasm. The enzyme catalyses 4-(phosphooxy)-L-threonine + NAD(+) = 3-amino-2-oxopropyl phosphate + CO2 + NADH. The protein operates within cofactor biosynthesis; pyridoxine 5'-phosphate biosynthesis; pyridoxine 5'-phosphate from D-erythrose 4-phosphate: step 4/5. Its function is as follows. Catalyzes the NAD(P)-dependent oxidation of 4-(phosphooxy)-L-threonine (HTP) into 2-amino-3-oxo-4-(phosphooxy)butyric acid which spontaneously decarboxylates to form 3-amino-2-oxopropyl phosphate (AHAP). This is Putative 4-hydroxythreonine-4-phosphate dehydrogenase from Pasteurella multocida (strain Pm70).